Here is a 296-residue protein sequence, read N- to C-terminus: Elongation factor Ts (296 aa).

The involved in Mg(2+) ion dislocation from EF-Tu stretch occupies residues 79 to 82; that stretch reads TDFV.

It belongs to the EF-Ts family.

Its subcellular location is the cytoplasm. In terms of biological role, associates with the EF-Tu.GDP complex and induces the exchange of GDP to GTP. It remains bound to the aminoacyl-tRNA.EF-Tu.GTP complex up to the GTP hydrolysis stage on the ribosome. This chain is Elongation factor Ts, found in Paracoccus denitrificans (strain Pd 1222).